The following is an 85-amino-acid chain: Alpha-toxin BmalphaTx47 (85 aa).

An N-terminal signal peptide occupies residues 1–19; that stretch reads MNYLIVISFALLLMTGVQS. Positions 21 to 83 constitute an LCN-type CS-alpha/beta domain; sequence RDAYIADSEN…VPIRISGSCR (63 aa). 4 disulfide bridges follow: Cys31–Cys82, Cys35–Cys55, Cys41–Cys65, and Cys45–Cys67.

It belongs to the long (4 C-C) scorpion toxin superfamily. Sodium channel inhibitor family. Alpha subfamily. As to expression, expressed by the venom gland.

It localises to the secreted. In terms of biological role, alpha toxins bind voltage-independently at site-3 of sodium channels (Nav) and inhibit the inactivation of the activated channels, thereby blocking neuronal transmission. This toxin expressed with the pET-14b vector has low inhibitory activity on sodium channels (11.33% on rNav1.2/SCN2A, 15.96% on mNav1.4/SCN4A and 5.04% on hNav1.5/SCN5A). When expressed with the pET-28a vector, this toxin has higher inhibitory activities (44.12% on rNav1.2/SCN2A, 25.40% on mNav1.4/SCN4A and 65.34% on hNav1.5/SCN5A). The chain is Alpha-toxin BmalphaTx47 from Olivierus martensii (Manchurian scorpion).